The primary structure comprises 682 residues: Putative L-type lectin-domain containing receptor kinase I.1 (682 aa).

Positions 1–19 (MAQRLHLLLLLFLICFVNL) are cleaved as a signal peptide. The Extracellular segment spans residues 20-292 (ISFSSQQDLS…RPKKPEKTSP (273 aa)). The tract at residues 27-264 (DLSFIYNGFN…YQYILGWSFS (238 aa)) is legume-lectin like. N-linked (GlcNAc...) asparagine glycosylation is found at N60, N130, N187, N210, and N231. The helical transmembrane segment at 293–313 (LLIVLLIILAIIVMVVVGGFY) threads the bilayer. Over 314 to 682 (LYRRKKYAEV…SHTIIYGDGR (369 aa)) the chain is Cytoplasmic. A Protein kinase domain is found at 348–622 (FNKDGRLGRG…VQYINRHQRL (275 aa)). ATP-binding positions include 354–362 (LGRGGFGEV) and K376. Catalysis depends on D472, which acts as the Proton acceptor.

This sequence in the C-terminal section; belongs to the protein kinase superfamily. Ser/Thr protein kinase family. In the N-terminal section; belongs to the leguminous lectin family.

The protein localises to the cell membrane. The catalysed reaction is L-seryl-[protein] + ATP = O-phospho-L-seryl-[protein] + ADP + H(+). The enzyme catalyses L-threonyl-[protein] + ATP = O-phospho-L-threonyl-[protein] + ADP + H(+). Functionally, involved in resistance response to the pathogenic fungus Alternaria brassicicola. The sequence is that of Putative L-type lectin-domain containing receptor kinase I.1 from Arabidopsis thaliana (Mouse-ear cress).